The primary structure comprises 444 residues: MKHFEANFDGLVGPTHNYAGLSFGNVASLSNAALVSNPKAAAKQGLQKAKALADMGMVQGMLAPQERPDLYTLRRIGFSGSDANVLKQAAKEAPMLLNACCSASSMWTANAATVSPSADTRDGKLHFTPANLVDKLHRSIEPLTTGRILTATFSDPHYFHHHSHLPEHNSFGDEGAANHTRLCNEYGHAGVELFVYGQEATNPNAPKPQKYPARQTLEASMAVARLHQLEEDNCVFIQQNPDVIDQGVFHNDVIAVGNQNVLFYHEQAFLNTQHKIDEIKRKLDTELYFIEVPTAKVAINDAVKSYLFNTQIITLPSGEMVIVAPTDCQENPAVFAYLNELLTLNTPIKQVLYFDVKQSMQNGGGPACLRLRVAMNEMEVAAVNQHTLMNDALFSRLNLWVDKHYRDRLTTQDLADPQLIIESRTALDELTQIMKLGSVYQFQR.

Substrate contacts are provided by residues 19-28, Asn-110, and 137-138; these read AGLSFGNVAS and HR. The active site involves Glu-174. Arg-214 is a substrate binding site. The active site involves His-250. Residues Asp-252 and Asn-362 each coordinate substrate. Cys-368 acts as the Nucleophile in catalysis.

It belongs to the succinylarginine dihydrolase family. In terms of assembly, homodimer.

It catalyses the reaction N(2)-succinyl-L-arginine + 2 H2O + 2 H(+) = N(2)-succinyl-L-ornithine + 2 NH4(+) + CO2. The protein operates within amino-acid degradation; L-arginine degradation via AST pathway; L-glutamate and succinate from L-arginine: step 2/5. In terms of biological role, catalyzes the hydrolysis of N(2)-succinylarginine into N(2)-succinylornithine, ammonia and CO(2). In Shewanella baltica (strain OS223), this protein is N-succinylarginine dihydrolase.